Consider the following 406-residue polypeptide: Arginine deiminase (406 aa).

C396 acts as the Amidino-cysteine intermediate in catalysis.

It belongs to the arginine deiminase family.

The protein resides in the cytoplasm. It catalyses the reaction L-arginine + H2O = L-citrulline + NH4(+). It participates in amino-acid degradation; L-arginine degradation via ADI pathway; carbamoyl phosphate from L-arginine: step 1/2. The polypeptide is Arginine deiminase (Vibrio campbellii (strain ATCC BAA-1116)).